A 549-amino-acid chain; its full sequence is Membrane protein insertase YidC (549 aa).

A helical membrane pass occupies residues Val8–Ser28. Over residues Pro29 to Pro39 the composition is skewed to pro residues. Residues Pro29–Asp68 are disordered. Low complexity-rich tracts occupy residues Glu40–Ala49 and Gln55–Asp68. 4 helical membrane passes run Ile328–Met348, Leu354–Tyr374, Leu424–Leu444, and Pro502–Val522.

The protein belongs to the OXA1/ALB3/YidC family. Type 1 subfamily. Interacts with the Sec translocase complex via SecD. Specifically interacts with transmembrane segments of nascent integral membrane proteins during membrane integration.

Its subcellular location is the cell inner membrane. Its function is as follows. Required for the insertion and/or proper folding and/or complex formation of integral membrane proteins into the membrane. Involved in integration of membrane proteins that insert both dependently and independently of the Sec translocase complex, as well as at least some lipoproteins. Aids folding of multispanning membrane proteins. This is Membrane protein insertase YidC from Anaeromyxobacter sp. (strain Fw109-5).